The sequence spans 166 residues: Large ribosomal subunit protein uL11 (166 aa).

Residue Arg67 is modified to N5-methylarginine.

This sequence belongs to the universal ribosomal protein uL11 family.

The protein is Large ribosomal subunit protein uL11 (RPL12) of Encephalitozoon cuniculi (strain GB-M1) (Microsporidian parasite).